The primary structure comprises 151 residues: Transcriptional regulator MraZ (151 aa).

SpoVT-AbrB domains follow at residues 5–52 and 81–124; these read ANAI…PLDE and AVDL…DEDA.

Belongs to the MraZ family. As to quaternary structure, forms oligomers.

It is found in the cytoplasm. It localises to the nucleoid. The chain is Transcriptional regulator MraZ from Pseudomonas fluorescens (strain Pf0-1).